The sequence spans 616 residues: D-glucuronyl C5-epimerase (616 aa).

The Cytoplasmic portion of the chain corresponds to 1 to 12 (MKCLRWRSNRHR). Residues 13-29 (IYLLVACGALFLLNRHL) traverse the membrane as a helical; Signal-anchor for type II membrane protein segment. Over 30–616 (TQEESRIDEE…YAYGKRAKHN (587 aa)) the chain is Extracellular. Residues Tyr136, 141–143 (RDR), and Gln169 each bind substrate. Asn188, Asn232, Asn267, and Asn471 each carry an N-linked (GlcNAc...) asparagine glycan. Substrate is bound by residues Tyr504, Arg562, and 574 to 580 (RWDYHAV).

It belongs to the D-glucuronyl C5-epimerase family. Homodimer. As to expression, expression in comma stage embryos is strong in the hypodermis and intestine and weaker in the head region. In late embryos, larval, and adult stages, expressed primarily in hypodermis and intestine.

Its subcellular location is the cell membrane. The protein resides in the secreted. It is found in the extracellular space. The protein localises to the extracellular matrix. It localises to the basement membrane. It carries out the reaction [heparosan-N-sulfate](n) = [heparan-N-sulfate](n). Its pathway is glycan metabolism; heparan sulfate biosynthesis. The protein operates within glycan metabolism; heparin biosynthesis. In terms of biological role, converts D-glucuronic acid residues adjacent to N-sulfate sugar residues to L-iduronic acids. Plays a role in the early migration of AQR and PQR neurons, which descend from the Q neuroblasts. This chain is D-glucuronyl C5-epimerase (hse-5), found in Caenorhabditis elegans.